The chain runs to 304 residues: Acetyl-coenzyme A carboxylase carboxyl transferase subunit beta (304 aa).

Residues leucine 25 to glutamine 294 form the CoA carboxyltransferase N-terminal domain.

The protein belongs to the AccD/PCCB family. In terms of assembly, acetyl-CoA carboxylase is a heterohexamer composed of biotin carboxyl carrier protein (AccB), biotin carboxylase (AccC) and two subunits each of ACCase subunit alpha (AccA) and ACCase subunit beta (AccD).

The protein localises to the cytoplasm. The catalysed reaction is N(6)-carboxybiotinyl-L-lysyl-[protein] + acetyl-CoA = N(6)-biotinyl-L-lysyl-[protein] + malonyl-CoA. The protein operates within lipid metabolism; malonyl-CoA biosynthesis; malonyl-CoA from acetyl-CoA: step 1/1. In terms of biological role, component of the acetyl coenzyme A carboxylase (ACC) complex. Biotin carboxylase (BC) catalyzes the carboxylation of biotin on its carrier protein (BCCP) and then the CO(2) group is transferred by the transcarboxylase to acetyl-CoA to form malonyl-CoA. This Sinorhizobium fredii (strain NBRC 101917 / NGR234) protein is Acetyl-coenzyme A carboxylase carboxyl transferase subunit beta.